Reading from the N-terminus, the 622-residue chain is Low affinity potassium transport system protein Kup (622 aa).

Transmembrane regions (helical) follow at residues 9–29 (LPAI…TSPL), 49–69 (VFGF…IKYL), 103–123 (VIMG…TPAI), 137–157 (PQLD…LFMI), 165–185 (VGKL…GLGL), 213–233 (VSFI…ALYA), 247–267 (WFTV…ALLL), 276–296 (PFFL…AALA), 337–357 (IYIP…IVSF), 363–383 (LAAA…ILST), 396–416 (FVAL…TANL), and 419–439 (LLSG…VMTT).

This sequence belongs to the HAK/KUP transporter (TC 2.A.72) family.

The protein localises to the cell inner membrane. The enzyme catalyses K(+)(in) + H(+)(in) = K(+)(out) + H(+)(out). Functionally, responsible for the low-affinity transport of potassium into the cell. Likely operates as a K(+):H(+) symporter. This Escherichia coli O157:H7 (strain EC4115 / EHEC) protein is Low affinity potassium transport system protein Kup.